Consider the following 331-residue polypeptide: MSKVAFLGAGSFGTSLGILLGNKGVTVSLWDRDENVINDINVNRKNDKYIKDLTIPTNVTAYKDLDEALNGAEYVVLAVPSHVIRTACKNLKGKINDDVIIINIAKGIEEGTNLRLSQVINQELPNNKVVVLSGPSHAEEVSKGIPTTLVASSECMECAEKVQDLFMDKNFRIYTNDDIIGVEIGGAVKNIIALAAGVCDGIGYGDNSKAALMTRGMAEIARIGIKMGGKAETFFGLTGMGDLIVTCTSMHSRNRRAGILIGQGKTAEEAIEEVGMVVEGIKACKAFYELKEKEGVTMPITDIAYKVLFEGAKAENAVSLLMERDKKKEEI.

Residues serine 11, phenylalanine 12, arginine 32, and lysine 106 each coordinate NADPH. Residues lysine 106, glycine 134, and serine 136 each contribute to the sn-glycerol 3-phosphate site. Residue alanine 138 coordinates NADPH. Sn-glycerol 3-phosphate is bound by residues lysine 189, aspartate 242, serine 252, arginine 253, and asparagine 254. Residue lysine 189 is the Proton acceptor of the active site. Arginine 253 contacts NADPH. Positions 277 and 279 each coordinate NADPH.

It belongs to the NAD-dependent glycerol-3-phosphate dehydrogenase family.

It localises to the cytoplasm. It catalyses the reaction sn-glycerol 3-phosphate + NAD(+) = dihydroxyacetone phosphate + NADH + H(+). It carries out the reaction sn-glycerol 3-phosphate + NADP(+) = dihydroxyacetone phosphate + NADPH + H(+). It functions in the pathway membrane lipid metabolism; glycerophospholipid metabolism. In terms of biological role, catalyzes the reduction of the glycolytic intermediate dihydroxyacetone phosphate (DHAP) to sn-glycerol 3-phosphate (G3P), the key precursor for phospholipid synthesis. In Clostridium perfringens (strain ATCC 13124 / DSM 756 / JCM 1290 / NCIMB 6125 / NCTC 8237 / Type A), this protein is Glycerol-3-phosphate dehydrogenase [NAD(P)+].